A 919-amino-acid chain; its full sequence is Glutamate receptor ionotropic, kainate 3 (919 aa).

A signal peptide spans 1 to 31 (MTAPWRRLRSLVWEYWAGFLVCAFWIPDSRG). The Extracellular portion of the chain corresponds to 32-563 (MPHVIRIGGI…VFSFLNPLSP (532 aa)). Residues N70, N76, N278, N381, N415, N426, and N433 are each glycosylated (N-linked (GlcNAc...) asparagine). An intrachain disulfide couples C99 to C350. 3 residues coordinate L-glutamate: P518, T520, and R525. N548 and N551 each carry an N-linked (GlcNAc...) asparagine glycan. The chain crosses the membrane as a helical span at residues 564 to 584 (DIWMYVLLAYLGVSCVLFVIA). Residues 585–636 (RFSPYEWYDAHPCNPGSEVVENNFTLLNSFWFGMGSLMQQGSELMPKALSTR) lie on the Cytoplasmic side of the membrane. The chain crosses the membrane as a helical span at residues 637-657 (IIGGIWWFFTLIIISSYTANL). At 658 to 820 (AAFLTVERME…KEASALGIQK (163 aa)) the chain is on the extracellular side. Residues A691, T692, and E739 each coordinate L-glutamate. Residue N752 is glycosylated (N-linked (GlcNAc...) asparagine). The helical transmembrane segment at 821 to 841 (IGGIFIVLAAGLVLSVLVAVG) threads the bilayer. The Cytoplasmic portion of the chain corresponds to 842 to 919 (EFIYKLRKTA…CSTSLAPVFP (78 aa)). Position 869 is a phosphoserine (S869). A Glycyl lysine isopeptide (Lys-Gly) (interchain with G-Cter in SUMO1) cross-link involves residue K887.

It belongs to the glutamate-gated ion channel (TC 1.A.10.1) family. GRIK3 subfamily. In terms of assembly, homotetramer, and heterotetramer with GRIK4 or GRIK5. Can form functional heteromeric receptors with GRIK2. Interacts with PRKCABP. Interacts with NETO2. As to quaternary structure, homomeric GluR7A forms functional kainate receptors which have very low sensitivity to glutamate. Can form functional heteromeric receptors with GRIK4 and GRIK5. Homomeric GluR7B forms functional kainate receptors. Mass spectrometry data suggest the protein is N-glycosylated at five distinct sites. Expressed in the olfactory bulb (at protein level). Expressed in the deep cortical layers, dentate gyrus, reticular thalamic nucleus, mammillary bodies, pons, and cerebellum of the adult.

It is found in the cell membrane. The protein localises to the postsynaptic cell membrane. The catalysed reaction is Ca(2+)(in) = Ca(2+)(out). Its function is as follows. Ionotropic glutamate receptor that functions as a cation-permeable ligand-gated ion channel, gated by L-glutamate and the glutamatergic agonist kainic acid. Binding of the excitatory neurotransmitter L-glutamate induces a conformation change, leading to the opening of the cation channel, and thereby converts the chemical signal to an electrical impulse. The receptor then desensitizes rapidly and enters a transient inactive state, characterized by the presence of bound agonist. In association with GRIK2, involved in presynaptic facilitation of glutamate release at hippocampal mossy fiber synapses. In terms of biological role, ionotropic glutamate receptor that functions as a ligand-gated cation channel, gated by L-glutamate and the glutamatergic agonist kainic acid. This is Glutamate receptor ionotropic, kainate 3 (Grik3) from Rattus norvegicus (Rat).